Here is a 331-residue protein sequence, read N- to C-terminus: Probable allantoicase (331 aa).

The protein belongs to the allantoicase family.

The catalysed reaction is allantoate + H2O = (S)-ureidoglycolate + urea. Its pathway is nitrogen metabolism; (S)-allantoin degradation; (S)-ureidoglycolate from allantoate (aminidohydrolase route): step 1/1. This is Probable allantoicase from Pseudomonas syringae pv. tomato (strain ATCC BAA-871 / DC3000).